A 196-amino-acid chain; its full sequence is ATP synthase subunit b 2 (196 aa).

Low complexity predominate over residues 1-18 (MVVAQAGAPAHPPAAHGA). Residues 1-33 (MVVAQAGAPAHPPAAHGAEAGHGEAAGGEHGGF) form a disordered region. A helical membrane pass occupies residues 41-60 (FASQLIWLIVSFGALYFLMS).

The protein belongs to the ATPase B chain family. In terms of assembly, F-type ATPases have 2 components, F(1) - the catalytic core - and F(0) - the membrane proton channel. F(1) has five subunits: alpha(3), beta(3), gamma(1), delta(1), epsilon(1). F(0) has three main subunits: a(1), b(2) and c(10-14). The alpha and beta chains form an alternating ring which encloses part of the gamma chain. F(1) is attached to F(0) by a central stalk formed by the gamma and epsilon chains, while a peripheral stalk is formed by the delta and b chains.

It is found in the cell inner membrane. In terms of biological role, f(1)F(0) ATP synthase produces ATP from ADP in the presence of a proton or sodium gradient. F-type ATPases consist of two structural domains, F(1) containing the extramembraneous catalytic core and F(0) containing the membrane proton channel, linked together by a central stalk and a peripheral stalk. During catalysis, ATP synthesis in the catalytic domain of F(1) is coupled via a rotary mechanism of the central stalk subunits to proton translocation. Component of the F(0) channel, it forms part of the peripheral stalk, linking F(1) to F(0). The b'-subunit is a diverged and duplicated form of b found in plants and photosynthetic bacteria. In Azorhizobium caulinodans (strain ATCC 43989 / DSM 5975 / JCM 20966 / LMG 6465 / NBRC 14845 / NCIMB 13405 / ORS 571), this protein is ATP synthase subunit b 2 (atpF2).